Here is a 269-residue protein sequence, read N- to C-terminus: Probable 3-deoxy-manno-octulosonic acid transferase (269 aa).

It is found in the cytoplasm. It catalyses the reaction an alpha-Kdo-(2-&gt;4)-alpha-Kdo-(2-&gt;6)-lipid IVA + CMP-3-deoxy-beta-D-manno-octulosonate = an alpha-Kdo-(2-&gt;4)-alpha-Kdo-(2-&gt;4)-alpha-Kdo-(2-&gt;6)-lipid IVA + CMP + H(+). It functions in the pathway bacterial outer membrane biogenesis; LPS core biosynthesis. Its function is as follows. Involved in the biosynthesis of the core oligosaccharide region of lipopolysaccharide (LPS). Required for the addition of 3-deoxy-D-manno-oct-2-ulosonic acid III (KdoIII) to the KdoII residue of the inner lipopolysaccharide core. This chain is Probable 3-deoxy-manno-octulosonic acid transferase, found in Salmonella typhimurium (strain LT2 / SGSC1412 / ATCC 700720).